Consider the following 191-residue polypeptide: Calcium-activated potassium channel subunit beta-1 (191 aa).

The Cytoplasmic portion of the chain corresponds to 1–18 (MGKKLVMAQKRGETRALC). The chain crosses the membrane as a helical span at residues 19-39 (LGVAMVVCAAITYYVLGTTVL). Residues 40–155 (PLYQKSVWTQ…VVYQRLYGPQ (116 aa)) are Extracellular-facing. N-linked (GlcNAc...) asparagine glycosylation is found at N80 and N142. The helical transmembrane segment at 156 to 176 (VLLFSFFWPTFLLTGGLLLIA) threads the bilayer. The Cytoplasmic segment spans residues 177-191 (MVKLNRSLSILAAQK).

It belongs to the KCNMB (TC 8.A.14.1) family. KCNMB1 subfamily. In terms of assembly, interacts with KCNMA1 tetramer. There are probably 4 molecules of KCMNB1 per KCNMA1 tetramer. Post-translationally, N-glycosylated. In terms of tissue distribution, expressed in many tissues containing smooth muscles. In brain and heart, it is not expressed except in the vasculature, such as cerebral arteries, aorta and corona arteries.

It is found in the membrane. Its function is as follows. Regulatory subunit of the calcium activated potassium KCNMA1 (maxiK) channel. Modulates the calcium sensitivity and gating kinetics of KCNMA1, thereby contributing to KCNMA1 channel diversity. Increases the apparent Ca(2+)/voltage sensitivity of the KCNMA1 channel. It also modifies KCNMA1 channel kinetics and alters its pharmacological properties. It slows down the activation and the deactivation kinetics of the channel. Acts as a negative regulator of smooth muscle contraction by enhancing the calcium sensitivity to KCNMA1. Its presence is also a requirement for internal binding of the KCNMA1 channel opener dehydrosoyasaponin I (DHS-1) triterpene glycoside and for external binding of the agonist hormone 17-beta-estradiol (E2). Increases the binding activity of charybdotoxin (CTX) toxin to KCNMA1 peptide blocker by increasing the CTX association rate and decreasing the dissociation rate. This Mus musculus (Mouse) protein is Calcium-activated potassium channel subunit beta-1 (Kcnmb1).